A 194-amino-acid polypeptide reads, in one-letter code: WASH complex subunit 3 (194 aa).

N-acetylmethionine is present on methionine 1. Residues 46–74 (AVCEEKLADLSLRIQQIETTLNILDAKLS) are a coiled coil. 2 disordered regions span residues 94–126 (VTNG…PSEN) and 158–194 (SEGL…SFSD). Positions 98-113 (SHSETTSEQTQQNSTQ) are enriched in low complexity. Polar residues predominate over residues 114–126 (DSGAQESEAPSEN).

It belongs to the CCDC53 family. As to quaternary structure, component of the WASH core complex also described as WASH regulatory complex (SHRC) composed of WASHC1, WASHC2, WASHC3, WASHC4 and WASHC5. The WASH core complex associates via WASHC2 with the F-actin-capping protein dimer (formed by CAPZA1, CAPZA2 or CAPZA3 and CAPZB) in a transient or substoichiometric manner which was initially described as WASH complex.

It is found in the early endosome. Functionally, acts as a component of the WASH core complex that functions as a nucleation-promoting factor (NPF) at the surface of endosomes, where it recruits and activates the Arp2/3 complex to induce actin polymerization, playing a key role in the fission of tubules that serve as transport intermediates during endosome sortingg. The polypeptide is WASH complex subunit 3 (Mus musculus (Mouse)).